The chain runs to 750 residues: Photosystem I P700 chlorophyll a apoprotein A1 (750 aa).

A run of 8 helical transmembrane segments spans residues 70-93 (IFSA…FHGA), 156-179 (LYCT…FHYH), 195-219 (LNHH…HVSL), 291-309 (TAHH…GHMY), 346-369 (WHAQ…HHMY), 385-411 (LSLF…IFMV), 433-455 (AIIS…LYIH), and 531-549 (FLVH…LILL). [4Fe-4S] cluster contacts are provided by cysteine 573 and cysteine 582. The next 2 membrane-spanning stretches (helical) occupy residues 589 to 610 (HVFL…HFSW) and 664 to 686 (LSAY…MFLF). Histidine 675 contributes to the chlorophyll a' binding site. Chlorophyll a is bound by residues methionine 683 and tyrosine 691. Position 692 (tryptophan 692) interacts with phylloquinone. A helical transmembrane segment spans residues 724 to 744 (AVGVTHYLLGGIATTWAFFLA).

It belongs to the PsaA/PsaB family. The PsaA/B heterodimer binds the P700 chlorophyll special pair and subsequent electron acceptors. PSI consists of a core antenna complex that captures photons, and an electron transfer chain that converts photonic excitation into a charge separation. The eukaryotic PSI reaction center is composed of at least 11 subunits. P700 is a chlorophyll a/chlorophyll a' dimer, A0 is one or more chlorophyll a, A1 is one or both phylloquinones and FX is a shared 4Fe-4S iron-sulfur center. serves as cofactor.

The protein resides in the plastid. The protein localises to the chloroplast thylakoid membrane. It catalyses the reaction reduced [plastocyanin] + hnu + oxidized [2Fe-2S]-[ferredoxin] = oxidized [plastocyanin] + reduced [2Fe-2S]-[ferredoxin]. Its function is as follows. PsaA and PsaB bind P700, the primary electron donor of photosystem I (PSI), as well as the electron acceptors A0, A1 and FX. PSI is a plastocyanin-ferredoxin oxidoreductase, converting photonic excitation into a charge separation, which transfers an electron from the donor P700 chlorophyll pair to the spectroscopically characterized acceptors A0, A1, FX, FA and FB in turn. Oxidized P700 is reduced on the lumenal side of the thylakoid membrane by plastocyanin. This chain is Photosystem I P700 chlorophyll a apoprotein A1, found in Spinacia oleracea (Spinach).